The following is a 95-amino-acid chain: U8-barytoxin-Tl1a (95 aa).

A signal peptide spans 1–21; sequence MKTLVLVAVLGLASLYLLSYA. Positions 22–50 are excised as a propeptide; the sequence is SEVQQLSVAEEEFGALIDAFGGLLETEER. Disulfide bonds link Cys-57/Cys-71, Cys-64/Cys-76, and Cys-70/Cys-86.

The protein belongs to the neurotoxin 10 (Hwtx-1) family. 26 (ICK-1) subfamily. Expressed by the venom gland.

It is found in the secreted. Ion channel inhibitor. This is U8-barytoxin-Tl1a from Trittame loki (Brush-footed trapdoor spider).